A 738-amino-acid polypeptide reads, in one-letter code: YTH domain-containing protein 1 (738 aa).

Over residues 1-12 the composition is skewed to basic and acidic residues; it reads MAADSREEKDGE. The segment at 1–341 is disordered; that stretch reads MAADSREEKD…KHEKLSSSVR (341 aa). Serine 35 is subject to Phosphoserine. The segment covering 50 to 59 has biased composition (basic and acidic residues); the sequence is ERMESIDTKR. A compositionally biased stretch (polar residues) spans 63–90; that stretch reads SIHSRQLISKPLSSSVSNNKRIVSTKGK. The span at 91–115 shows a compositional bias: basic and acidic residues; it reads SVTEYKNEEYQRSERNKRLDADRKI. Lysine 96 is covalently cross-linked (Glycyl lysine isopeptide (Lys-Gly) (interchain with G-Cter in SUMO2)). 2 positions are modified to phosphoserine: serine 118 and serine 120. The span at 124–144 shows a compositional bias: basic and acidic residues; sequence EPYKSQPEKPCLRKRDSERRA. Position 146 is a phosphoserine (serine 146). A Phosphothreonine modification is found at threonine 148. Basic and acidic residues-rich tracts occupy residues 151 to 163 and 170 to 185; these read GSERIGLEVDRRA and SKEEGNSEEYGSDHET. Polar residues predominate over residues 186 to 197; that stretch reads GSSASSEQGNNT. A compositionally biased stretch (acidic residues) spans 198–257; it reads ENEEEGGEEDVEEDEEVDEDGDDDEEVDEDAEEEEDEEEDEEEEDEEEEEEEEEEYEQDE. A compositionally biased stretch (basic and acidic residues) spans 258–273; sequence RDQKEEGNDYDTRSEA. Residues 283-292 show a composition bias toward polar residues; that stretch reads FTDGSVRSGS. Serine 311, serine 318, serine 320, serine 321, and serine 323 each carry phosphoserine. Positions 318-328 are enriched in low complexity; it reads SGSSASESYAG. A YTH domain is found at 358 to 495; the sequence is ARFFLIKSNN…ECGTQLCLLF (138 aa). RNA is bound by residues 364 to 366 and tryptophan 380; that span reads KSN. Serine 427 carries the phosphoserine modification. Tryptophan 431 contributes to the RNA binding site. Serine 438 is subject to Phosphoserine. Aspartate 479 provides a ligand contact to RNA. Basic residues predominate over residues 512–526; sequence HKRRMHSQPRSRGRP. 3 disordered regions span residues 512–566, 618–654, and 680–738; these read HKRR…RPGY, GMPPYPGIEQPPHHPYYQHHAPPPQAHPPYSGHHPVP, and AVVS…RYRR. Over residues 527–566 the composition is skewed to basic and acidic residues; sequence SRREPVRDVGRRRPEDYDIHNSRKKPRIDYPPEFHQRPGY. At serine 548 the chain carries Phosphoserine. Positions 690-738 are enriched in basic and acidic residues; sequence RERDRERERDRPRDNRRDRERDRGRDRERERERICDRDRDRGERGRYRR.

In terms of assembly, interacts with SRSF1. Interacts with SRSF2. Interacts with SRSF3. Interacts with SRSF7. Interacts with SRSF10. Interacts with CPSF6. Interacts with KHDRBS1/SAM68. Interacts with TRA2B. Interacts with KHDRBS3. Interacts with EMD. Interacts with RBMX. Interacts with ZCCHC8. In terms of processing, tyrosine phosphorylated. Ubiquitous.

The protein resides in the nucleus. Its subcellular location is the nucleus speckle. Its function is as follows. Regulator of alternative splicing that specifically recognizes and binds N6-methyladenosine (m6A)-containing RNAs. M6A is a modification present at internal sites of mRNAs and some non-coding RNAs and plays a role in the efficiency of mRNA splicing, processing and stability. Acts as a key regulator of exon-inclusion or exon-skipping during alternative splicing via interaction with mRNA splicing factors SRSF3 and SRSF10. Specifically binds m6A-containing mRNAs and promotes recruitment of SRSF3 to its mRNA-binding elements adjacent to m6A sites, leading to exon-inclusion during alternative splicing. In contrast, interaction with SRSF3 prevents interaction with SRSF10, a splicing factor that promotes exon skipping: this prevents SRSF10 from binding to its mRNA-binding sites close to m6A-containing regions, leading to inhibit exon skipping during alternative splicing. May also regulate alternative splice site selection. Also involved in nuclear export of m6A-containing mRNAs via interaction with SRSF3: interaction with SRSF3 facilitates m6A-containing mRNA-binding to both SRSF3 and NXF1, promoting mRNA nuclear export. Involved in S-adenosyl-L-methionine homeostasis by regulating expression of MAT2A transcripts, probably by binding m6A-containing MAT2A mRNAs. Also recognizes and binds m6A on other RNA molecules. Involved in random X inactivation mediated by Xist RNA: recognizes and binds m6A-containing Xist and promotes transcription repression activity of Xist. Also recognizes and binds m6A-containing single-stranded DNA. Involved in germline development: required for spermatogonial development in males and oocyte growth and maturation in females, probably via its role in alternative splicing. This is YTH domain-containing protein 1 (Ythdc1) from Rattus norvegicus (Rat).